Consider the following 119-residue polypeptide: Large ribosomal subunit protein uL24 (119 aa).

The protein belongs to the universal ribosomal protein uL24 family. In terms of assembly, part of the 50S ribosomal subunit.

One of two assembly initiator proteins, it binds directly to the 5'-end of the 23S rRNA, where it nucleates assembly of the 50S subunit. Functionally, one of the proteins that surrounds the polypeptide exit tunnel on the outside of the subunit. The chain is Large ribosomal subunit protein uL24 from Leifsonia xyli subsp. xyli (strain CTCB07).